The following is a 311-amino-acid chain: Aquaporin Lacbi1:392091 (311 aa).

Over 1 to 16 (MHPQVASLFDNVYEDL) the chain is Cytoplasmic. The helical transmembrane segment at 17–37 (AAATLEFIGTAFFLLFGLGGI) threads the bilayer. Over 38–56 (QASTAEDTASGQPPASGIE) the chain is Extracellular. Residues 57-77 (HVLYISTCMGLSLVVSAWLFF) traverse the membrane as a helical segment. Residue arginine 78 is a topological domain, cytoplasmic. The chain crosses the membrane as a helical span at residues 79 to 99 (VTGGLFNPNISFALLLVGGLK). Positions 85-87 (NPN) match the NPA 1 motif. Position 100 (proline 100) is a topological domain, extracellular. Residues 101–121 (LRFVLFCIAQLTGAIAGAAIV) traverse the membrane as a helical segment. Topologically, residues 122–143 (RGLTSAPLSVNNVLQQGTSAAQ) are cytoplasmic. The helical transmembrane segment at 144–164 (GVFIEMFITAALVLSVLMLAA) threads the bilayer. At 165–168 (EKHE) the chain is on the extracellular side. A helical membrane pass occupies residues 169-189 (ATPFAPVGIGLTLFACHLFAV). The Cytoplasmic portion of the chain corresponds to 190–215 (YYTGAAMNSARAFGPAVISGFPEPQH). The NPA 2 signature appears at 197–199 (NSA). Residues 216–236 (WVYWVGPFLGSLLGAGFYATL) form a helical membrane-spanning segment. The Extracellular portion of the chain corresponds to 237–311 (KHYKYWHLNP…TSSRTNFSPV (75 aa)). Residues 276–311 (DEETRNGCASNEEGVRATGDEKSSNATSSRTNFSPV) form a disordered region. Basic and acidic residues predominate over residues 288-298 (EGVRATGDEKS). Positions 299–311 (SNATSSRTNFSPV) are enriched in polar residues. The N-linked (GlcNAc...) asparagine glycan is linked to asparagine 300.

It belongs to the MIP/aquaporin (TC 1.A.8) family.

It localises to the membrane. The enzyme catalyses H2O(in) = H2O(out). It carries out the reaction NH4(+)(in) = NH4(+)(out). Functionally, water channel required to facilitate the transport of water across membranes. Also enables low but statistically significant ammonium permeability. May be involved in fungal nitrogen (ammonium) support of the plant host in symbiosis. The chain is Aquaporin Lacbi1:392091 from Laccaria bicolor (strain S238N-H82 / ATCC MYA-4686) (Bicoloured deceiver).